The primary structure comprises 300 residues: Probable lipid kinase YegS-like (300 aa).

One can recognise a DAGKc domain in the interval 1–129; that stretch reads MSKKALLILH…CDVIRVNNHY (129 aa). ATP-binding positions include Thr38, 64-70, and Thr92; that span reads GDGSVRD. Residues Leu210, Asp213, and Leu215 each coordinate Mg(2+). The Proton acceptor role is filled by Glu272.

The protein belongs to the diacylglycerol/lipid kinase family. YegS lipid kinase subfamily. It depends on Mg(2+) as a cofactor. Ca(2+) is required as a cofactor.

It is found in the cytoplasm. Its function is as follows. Probably phosphorylates lipids; the in vivo substrate is unknown. The polypeptide is Probable lipid kinase YegS-like (Alcanivorax borkumensis (strain ATCC 700651 / DSM 11573 / NCIMB 13689 / SK2)).